Reading from the N-terminus, the 298-residue chain is GTP cyclohydrolase FolE2 (298 aa).

This sequence belongs to the GTP cyclohydrolase IV family.

It catalyses the reaction GTP + H2O = 7,8-dihydroneopterin 3'-triphosphate + formate + H(+). It participates in cofactor biosynthesis; 7,8-dihydroneopterin triphosphate biosynthesis; 7,8-dihydroneopterin triphosphate from GTP: step 1/1. Converts GTP to 7,8-dihydroneopterin triphosphate. This chain is GTP cyclohydrolase FolE2, found in Pseudomonas paraeruginosa (strain DSM 24068 / PA7) (Pseudomonas aeruginosa (strain PA7)).